The sequence spans 134 residues: Small ribosomal subunit protein uS8 (134 aa).

Belongs to the universal ribosomal protein uS8 family. As to quaternary structure, part of the 30S ribosomal subunit. Contacts proteins S5 and S12.

Functionally, one of the primary rRNA binding proteins, it binds directly to 16S rRNA central domain where it helps coordinate assembly of the platform of the 30S subunit. This is Small ribosomal subunit protein uS8 from Thermotoga sp. (strain RQ2).